A 200-amino-acid polypeptide reads, in one-letter code: MAYTSKLIEEAINEISALPGIGKKTALRLVLFLLKSNPEQTERLATSLHKLRSQIQYCQKCHNISDTTLCSICANPHRDTGLICVVENIQDVIAIENTAQYKGIYHVLGGLISPVEGIGPEQLYIEHLVQRVQQEQPQEIIFALSTTIEGDTTTFYITKKLKEFPVKLSNIARGVAVGSELEYTDEMTLARSIKERILYH.

The C4-type zinc finger occupies 58 to 73 (CQKCHNISDTTLCSIC). The region spanning 81-176 (GLICVVENIQ…KLSNIARGVA (96 aa)) is the Toprim domain.

It belongs to the RecR family.

Functionally, may play a role in DNA repair. It seems to be involved in an RecBC-independent recombinational process of DNA repair. It may act with RecF and RecO. This chain is Recombination protein RecR, found in Amoebophilus asiaticus (strain 5a2).